We begin with the raw amino-acid sequence, 451 residues long: UDP-N-acetylmuramate--L-alanine ligase (451 aa).

110 to 116 lines the ATP pocket; it reads GTHGKTT.

The protein belongs to the MurCDEF family.

It is found in the cytoplasm. The catalysed reaction is UDP-N-acetyl-alpha-D-muramate + L-alanine + ATP = UDP-N-acetyl-alpha-D-muramoyl-L-alanine + ADP + phosphate + H(+). It functions in the pathway cell wall biogenesis; peptidoglycan biosynthesis. Its function is as follows. Cell wall formation. The polypeptide is UDP-N-acetylmuramate--L-alanine ligase (Francisella tularensis subsp. tularensis (strain SCHU S4 / Schu 4)).